We begin with the raw amino-acid sequence, 299 residues long: Phosphatidylserine decarboxylase proenzyme (299 aa).

Catalysis depends on charge relay system; for autoendoproteolytic cleavage activity residues aspartate 115, histidine 171, and serine 258. Residue serine 258 is the Schiff-base intermediate with substrate; via pyruvic acid; for decarboxylase activity of the active site. At serine 258 the chain carries Pyruvic acid (Ser); by autocatalysis.

The protein belongs to the phosphatidylserine decarboxylase family. PSD-B subfamily. Prokaryotic type II sub-subfamily. In terms of assembly, heterodimer of a large membrane-associated beta subunit and a small pyruvoyl-containing alpha subunit. Requires pyruvate as cofactor. In terms of processing, is synthesized initially as an inactive proenzyme. Formation of the active enzyme involves a self-maturation process in which the active site pyruvoyl group is generated from an internal serine residue via an autocatalytic post-translational modification. Two non-identical subunits are generated from the proenzyme in this reaction, and the pyruvate is formed at the N-terminus of the alpha chain, which is derived from the carboxyl end of the proenzyme. The autoendoproteolytic cleavage occurs by a canonical serine protease mechanism, in which the side chain hydroxyl group of the serine supplies its oxygen atom to form the C-terminus of the beta chain, while the remainder of the serine residue undergoes an oxidative deamination to produce ammonia and the pyruvoyl prosthetic group on the alpha chain. During this reaction, the Ser that is part of the protease active site of the proenzyme becomes the pyruvoyl prosthetic group, which constitutes an essential element of the active site of the mature decarboxylase.

Its subcellular location is the cell membrane. It carries out the reaction a 1,2-diacyl-sn-glycero-3-phospho-L-serine + H(+) = a 1,2-diacyl-sn-glycero-3-phosphoethanolamine + CO2. It functions in the pathway phospholipid metabolism; phosphatidylethanolamine biosynthesis; phosphatidylethanolamine from CDP-diacylglycerol: step 2/2. Functionally, catalyzes the formation of phosphatidylethanolamine (PtdEtn) from phosphatidylserine (PtdSer). The protein is Phosphatidylserine decarboxylase proenzyme of Chlamydia felis (strain Fe/C-56) (Chlamydophila felis).